The following is a 313-amino-acid chain: Acetaldehyde dehydrogenase 3 (313 aa).

13–16 (SGNI) is an NAD(+) binding site. Cysteine 133 acts as the Acyl-thioester intermediate in catalysis. NAD(+) contacts are provided by residues 164–172 (SAGPGTRAN) and asparagine 291.

This sequence belongs to the acetaldehyde dehydrogenase family.

The catalysed reaction is acetaldehyde + NAD(+) + CoA = acetyl-CoA + NADH + H(+). This Paraburkholderia xenovorans (strain LB400) protein is Acetaldehyde dehydrogenase 3.